Consider the following 184-residue polypeptide: Potassium-transporting ATPase KdpC subunit (184 aa).

The helical transmembrane segment at 6–26 (TAVLYTIISAVFLGLGYPLIM) threads the bilayer.

This sequence belongs to the KdpC family. In terms of assembly, the system is composed of three essential subunits: KdpA, KdpB and KdpC.

It localises to the cell inner membrane. Its function is as follows. Part of the high-affinity ATP-driven potassium transport (or Kdp) system, which catalyzes the hydrolysis of ATP coupled with the electrogenic transport of potassium into the cytoplasm. This subunit acts as a catalytic chaperone that increases the ATP-binding affinity of the ATP-hydrolyzing subunit KdpB by the formation of a transient KdpB/KdpC/ATP ternary complex. The polypeptide is Potassium-transporting ATPase KdpC subunit (Acidobacterium capsulatum (strain ATCC 51196 / DSM 11244 / BCRC 80197 / JCM 7670 / NBRC 15755 / NCIMB 13165 / 161)).